Here is a 1341-residue protein sequence, read N- to C-terminus: DNA-directed RNA polymerase subunit beta (1341 aa).

This sequence belongs to the RNA polymerase beta chain family. In terms of assembly, the RNAP catalytic core consists of 2 alpha, 1 beta, 1 beta' and 1 omega subunit. When a sigma factor is associated with the core the holoenzyme is formed, which can initiate transcription.

The enzyme catalyses RNA(n) + a ribonucleoside 5'-triphosphate = RNA(n+1) + diphosphate. In terms of biological role, DNA-dependent RNA polymerase catalyzes the transcription of DNA into RNA using the four ribonucleoside triphosphates as substrates. The polypeptide is DNA-directed RNA polymerase subunit beta (Photobacterium profundum (strain SS9)).